The following is a 370-amino-acid chain: Polygalacturonase 1 (370 aa).

Residues 1–18 (MRTSILSMLALGAAAVSA) form the signal peptide. The cysteines at positions 36 and 51 are disulfide-linked. PbH1 repeat units lie at residues 163-194 (ADNL…DVGE), 195-216 (STYI…AINS), 217-237 (GENI…SIGS), 246-267 (VKNV…RIKT), and 275-297 (VADV…VIEQ). Asp-209 functions as the Proton donor in the catalytic mechanism. Residues Cys-211 and Cys-227 are joined by a disulfide bond. His-231 is an active-site residue. An N-linked (GlcNAc...) asparagine glycan is attached at Asn-248. Cystine bridges form between Cys-337–Cys-342 and Cys-361–Cys-370.

Belongs to the glycosyl hydrolase 28 family.

The protein localises to the secreted. It carries out the reaction (1,4-alpha-D-galacturonosyl)n+m + H2O = (1,4-alpha-D-galacturonosyl)n + (1,4-alpha-D-galacturonosyl)m.. This is Polygalacturonase 1 (PG1) from Penicillium olsonii.